The sequence spans 326 residues: Zona pellucida-binding protein 2 (326 aa).

The N-terminal stretch at 1 to 19 (MLAWALLYAVLWSLAGVGS) is a signal peptide. 3 N-linked (GlcNAc...) asparagine glycosylation sites follow: Asn86, Asn220, and Asn256.

Belongs to the zona pellucida-binding protein Sp38 family. In terms of processing, N-glycosylated. In terms of tissue distribution, expressed specifically in male germ cells.

Its subcellular location is the cytoplasmic vesicle. The protein resides in the secretory vesicle. It localises to the acrosome. It is found in the secreted. Functionally, is implicated in sperm-oocyte interaction during fertilization. The chain is Zona pellucida-binding protein 2 (Zpbp2) from Mus musculus (Mouse).